Reading from the N-terminus, the 281-residue chain is MKNIGININTDKDISRNILDKIFQYIHEECSEAKIKVFYDSKGLDNEESRALDAVMVLGGDGTILGTARALAKYDVPIFGINRGHLGFLAEIELEDCKKAIKNLFKGQYKIEDRIMLKCDLKGIDKKDDFLALNDIVLTKGNLSRIVKYSIYVDDVWYTTFVADGVIVATPTGSTAYSLSAGGPIVYPDLDVLEIAPICPHSLGIRPILLNGNSKINIRVLKKYEDPVLTIDGQRYKKVTVNEVTISKSKYKCRLIKFKDKDYFKILRTKISYRSRECEGE.

Aspartate 61 functions as the Proton acceptor in the catalytic mechanism. Residues 61 to 62 (DG), 134 to 135 (ND), arginine 145, aspartate 164, 175 to 180 (TAYSLS), and glutamine 234 each bind NAD(+).

The protein belongs to the NAD kinase family. A divalent metal cation serves as cofactor.

It is found in the cytoplasm. It catalyses the reaction NAD(+) + ATP = ADP + NADP(+) + H(+). Functionally, involved in the regulation of the intracellular balance of NAD and NADP, and is a key enzyme in the biosynthesis of NADP. Catalyzes specifically the phosphorylation on 2'-hydroxyl of the adenosine moiety of NAD to yield NADP. The sequence is that of NAD kinase from Clostridium botulinum (strain 657 / Type Ba4).